Consider the following 278-residue polypeptide: Secoisolariciresinol dehydrogenase (278 aa).

Residues 23 to 28, aspartate 47, valine 73, and asparagine 99 each bind NAD(+); that span reads GGAGGI. Residues serine 104 and serine 164 each contribute to the substrate site. Tyrosine 167 (proton donor/acceptor) is an active-site residue. 2 residues coordinate NAD(+): lysine 171 and valine 200.

The protein belongs to the short-chain dehydrogenases/reductases (SDR) family. As to quaternary structure, homotetramer.

The enzyme catalyses (-)-secoisolariciresinol + 2 NAD(+) = (-)-matairesinol + 2 NADH + 2 H(+). Functionally, oxidoreductase involved in lignan biosynthesis. Catalyzes the stereospecific conversion of (-)-secoisolariciresinol to (-)-matairesinol via a lactol intermediate. This is Secoisolariciresinol dehydrogenase from Podophyllum peltatum (American mandrake).